We begin with the raw amino-acid sequence, 285 residues long: 2-dehydro-3-deoxyphosphooctonate aldolase (285 aa).

The protein belongs to the KdsA family.

The protein resides in the cytoplasm. It catalyses the reaction D-arabinose 5-phosphate + phosphoenolpyruvate + H2O = 3-deoxy-alpha-D-manno-2-octulosonate-8-phosphate + phosphate. The protein operates within carbohydrate biosynthesis; 3-deoxy-D-manno-octulosonate biosynthesis; 3-deoxy-D-manno-octulosonate from D-ribulose 5-phosphate: step 2/3. Its pathway is bacterial outer membrane biogenesis; lipopolysaccharide biosynthesis. The sequence is that of 2-dehydro-3-deoxyphosphooctonate aldolase from Polaromonas sp. (strain JS666 / ATCC BAA-500).